A 921-amino-acid chain; its full sequence is Probable serine/threonine-protein kinase DDB_G0275165 (921 aa).

Positions 23-277 (FDPLSIIGSG…SNILGLLEYI (255 aa)) constitute a Protein kinase domain. Residues 29–37 (IGSGGFGKV) and Lys-50 contribute to the ATP site. The active-site Proton acceptor is Asp-147. Disordered stretches follow at residues 289–453 (DYEP…SFPR), 465–492 (RGEE…NEED), 530–571 (RPWN…SDSN), 583–653 (NPTP…PTTI), 671–698 (STAT…SNNN), 737–813 (IQPL…SRSL), 833–858 (SSQQ…TSQF), and 877–921 (FEKS…KPKK). Composition is skewed to low complexity over residues 310-352 (NNNN…NNNN), 400-412 (SNIN…NNSN), and 429-445 (NING…NNNN). 2 stretches are compositionally biased toward low complexity: residues 539 to 550 (NNNNKNNNNNEK) and 583 to 638 (NPTP…SLSS). Over residues 643 to 653 (PQSTYKVPTTI) the composition is skewed to polar residues. Composition is skewed to low complexity over residues 748–775 (TVAA…PTST), 842–857 (QPSS…PTSQ), and 892–910 (TSSS…PSSP).

It belongs to the protein kinase superfamily. TKL Ser/Thr protein kinase family.

The enzyme catalyses L-seryl-[protein] + ATP = O-phospho-L-seryl-[protein] + ADP + H(+). The catalysed reaction is L-threonyl-[protein] + ATP = O-phospho-L-threonyl-[protein] + ADP + H(+). The polypeptide is Probable serine/threonine-protein kinase DDB_G0275165 (Dictyostelium discoideum (Social amoeba)).